Consider the following 132-residue polypeptide: Interleukin-5 (132 aa).

The signal sequence occupies residues 1 to 19 (MHLRLTLVALGAAYVCANA). N-linked (GlcNAc...) asparagine glycosylation is found at asparagine 74 and asparagine 88.

Belongs to the IL-5 family. In terms of assembly, homodimer; disulfide-linked. Interacts with IL5RA. Interacts with CSF2RB.

It localises to the secreted. Functionally, homodimeric cytokine expressed predominantly by T-lymphocytes and NK cells that plays an important role in the survival, differentiation, and chemotaxis of eosinophils. Also acts on activated and resting B-cells to induce immunoglobulin production, growth, and differentiation. Mechanistically, exerts its biological effects through a receptor composed of IL5RA subunit and the cytokine receptor common subunit beta/CSF2RB. Binding to the receptor leads to activation of various kinases including LYN, SYK and JAK2 and thereby propagates signals through the RAS-MAPK and JAK-STAT5 pathways respectively. The chain is Interleukin-5 (IL5) from Ovis aries (Sheep).